A 109-amino-acid polypeptide reads, in one-letter code: UPF0122 protein BH2485 (109 aa).

It belongs to the UPF0122 family.

Functionally, might take part in the signal recognition particle (SRP) pathway. This is inferred from the conservation of its genetic proximity to ftsY/ffh. May be a regulatory protein. This is UPF0122 protein BH2485 from Halalkalibacterium halodurans (strain ATCC BAA-125 / DSM 18197 / FERM 7344 / JCM 9153 / C-125) (Bacillus halodurans).